The chain runs to 345 residues: Dihydroorotate dehydrogenase (quinone) (345 aa).

FMN-binding positions include 65-69 and Thr89; that span reads AGLDK. Lys69 contacts substrate. Position 114–118 (114–118) interacts with substrate; sequence NRMGF. Asn142 and Asn175 together coordinate FMN. Asn175 serves as a coordination point for substrate. The active-site Nucleophile is the Ser178. Asn180 lines the substrate pocket. FMN is bound by residues Lys220 and Thr248. 249-250 lines the substrate pocket; that stretch reads NT. Residues Gly271, Gly300, and 321-322 contribute to the FMN site; that span reads YT.

It belongs to the dihydroorotate dehydrogenase family. Type 2 subfamily. Monomer. It depends on FMN as a cofactor.

Its subcellular location is the cell membrane. It carries out the reaction (S)-dihydroorotate + a quinone = orotate + a quinol. It participates in pyrimidine metabolism; UMP biosynthesis via de novo pathway; orotate from (S)-dihydroorotate (quinone route): step 1/1. Catalyzes the conversion of dihydroorotate to orotate with quinone as electron acceptor. The sequence is that of Dihydroorotate dehydrogenase (quinone) from Burkholderia mallei (strain NCTC 10247).